A 389-amino-acid polypeptide reads, in one-letter code: MAQQMSPGQHGSECIHDNAQSHLPPYVDCDSAGFRNNRSNLTLKFSSDFEKAQKAMEFCSDVCAVYFPADLDVVFNSEIENELAVDICEWRFFPCFSESLKRLAISMSRLSSLQIDLSYERRTLLHHHLVWIFLMDEVCERLPLLGLHDTMERKYLENLKNITMDLPIEDLNQYKGICPDDLLQVALDVQRILAEDLMPLKRALLEESHVQKCSETLCLFFDNQYEEGKIFFKRPTTHQIMSTRGYTIGTNMVFLLFLQTPMVDLYNADDPGLVQLSILVALFHDFIGLQKDLDSLKQDCDGSVGLNLVRVSMQESGHDEKEALQTVVRRLNSYCHGLEFFMSAYTPLCKQLYQEILKFVFALYDYHLLGATESSNSRYGWHRVSDYKA.

Residues Asp-136, Glu-140, His-284, Gly-288, and Asp-292 each coordinate Mg(2+). Positions 136–140 (DEVCE) match the DDxx(x)D/E motif motif. An NDxxSxxxD/E motif motif is present at residues 284-292 (HDFIGLQKD).

This sequence belongs to the terpene synthase family.

It carries out the reaction (2E,6E)-farnesyl diphosphate = bicyclogermacrene + diphosphate. Catalyzes the cyclization of trans,trans-farnesyl diphosphate (FPP) to the bicyclic sesquiterpene bicyclogermacrene. The protein is (+)-bicyclogermacrene synthase TS4 of Penicillium expansum (Blue mold rot fungus).